The following is a 410-amino-acid chain: Gamma-glutamyl phosphate reductase (410 aa).

The protein belongs to the gamma-glutamyl phosphate reductase family.

The protein localises to the cytoplasm. The enzyme catalyses L-glutamate 5-semialdehyde + phosphate + NADP(+) = L-glutamyl 5-phosphate + NADPH + H(+). The protein operates within amino-acid biosynthesis; L-proline biosynthesis; L-glutamate 5-semialdehyde from L-glutamate: step 2/2. Functionally, catalyzes the NADPH-dependent reduction of L-glutamate 5-phosphate into L-glutamate 5-semialdehyde and phosphate. The product spontaneously undergoes cyclization to form 1-pyrroline-5-carboxylate. The polypeptide is Gamma-glutamyl phosphate reductase (Sulfurimonas denitrificans (strain ATCC 33889 / DSM 1251) (Thiomicrospira denitrificans (strain ATCC 33889 / DSM 1251))).